Reading from the N-terminus, the 598-residue chain is UvrABC system protein C (598 aa).

Positions 14–91 (DSPGCYLHKD…IQKNMPKYNI (78 aa)) constitute a GIY-YIG domain. Positions 196–231 (DKIIEDLRSKMLAASEEMAFERAAEYRDLISGIATM) constitute a UVR domain.

The protein belongs to the UvrC family. As to quaternary structure, interacts with UvrB in an incision complex.

Its subcellular location is the cytoplasm. Functionally, the UvrABC repair system catalyzes the recognition and processing of DNA lesions. UvrC both incises the 5' and 3' sides of the lesion. The N-terminal half is responsible for the 3' incision and the C-terminal half is responsible for the 5' incision. This chain is UvrABC system protein C, found in Streptococcus pyogenes serotype M28 (strain MGAS6180).